The chain runs to 56 residues: Small ribosomal subunit protein bS21 (56 aa).

It belongs to the bacterial ribosomal protein bS21 family.

In Synechococcus sp. (strain RCC307), this protein is Small ribosomal subunit protein bS21.